We begin with the raw amino-acid sequence, 247 residues long: Adenosylcobinamide-GDP ribazoletransferase (247 aa).

5 helical membrane passes run Ile34–Val54, Cys59–Phe79, Gly113–Leu133, Ile138–Tyr158, and Val194–Ile214.

It belongs to the CobS family. Requires Mg(2+) as cofactor.

It localises to the cell inner membrane. It carries out the reaction alpha-ribazole + adenosylcob(III)inamide-GDP = adenosylcob(III)alamin + GMP + H(+). It catalyses the reaction alpha-ribazole 5'-phosphate + adenosylcob(III)inamide-GDP = adenosylcob(III)alamin 5'-phosphate + GMP + H(+). The protein operates within cofactor biosynthesis; adenosylcobalamin biosynthesis; adenosylcobalamin from cob(II)yrinate a,c-diamide: step 7/7. Its function is as follows. Joins adenosylcobinamide-GDP and alpha-ribazole to generate adenosylcobalamin (Ado-cobalamin). Also synthesizes adenosylcobalamin 5'-phosphate from adenosylcobinamide-GDP and alpha-ribazole 5'-phosphate. This chain is Adenosylcobinamide-GDP ribazoletransferase, found in Escherichia coli O157:H7.